The chain runs to 417 residues: Ribonuclease T2-like (417 aa).

Residues 1 to 22 (MSSISGFLGAIPGAQQILQTMA) form the signal peptide. 5 disulfide bridges follow: C45/C63, C52/C99, C62/C165, C107/C157, and C229/C264. Residue H92 is part of the active site. N115 carries N-linked (GlcNAc...) asparagine glycosylation. Residues E150 and H154 contribute to the active site. Residues 274–296 (KTPNKDPGHGHEPTKTRHPHGPT) are disordered. Residues 276–288 (PNKDPGHGHEPTK) are compositionally biased toward basic and acidic residues. Residue N383 is glycosylated (N-linked (GlcNAc...) asparagine).

Belongs to the RNase T2 family.

It is found in the vacuole lumen. It localises to the cytoplasm. It carries out the reaction a ribonucleotidyl-ribonucleotide-RNA + H2O = a 3'-end 3'-phospho-ribonucleotide-RNA + a 5'-end dephospho-ribonucleoside-RNA + H(+). Functionally, rnase which modulates cell survival under stress conditions. Released from the vacuole to the cytoplasm during stress to promote tRNA and rRNA cleavage and to activate separately a downstream pathway that promotes cell death. Involved in cell size, vacuolar morphology and growth at high temperatures and high salt concentration. The protein is Ribonuclease T2-like (rny1) of Emericella nidulans (strain FGSC A4 / ATCC 38163 / CBS 112.46 / NRRL 194 / M139) (Aspergillus nidulans).